Reading from the N-terminus, the 254-residue chain is UPF0246 protein BDI_1226 (254 aa).

The protein belongs to the UPF0246 family.

In Parabacteroides distasonis (strain ATCC 8503 / DSM 20701 / CIP 104284 / JCM 5825 / NCTC 11152), this protein is UPF0246 protein BDI_1226.